We begin with the raw amino-acid sequence, 67 residues long: DNA-directed RNA polymerase subunit omega (67 aa).

The protein belongs to the RNA polymerase subunit omega family. The RNAP catalytic core consists of 2 alpha, 1 beta, 1 beta' and 1 omega subunit. When a sigma factor is associated with the core the holoenzyme is formed, which can initiate transcription.

It catalyses the reaction RNA(n) + a ribonucleoside 5'-triphosphate = RNA(n+1) + diphosphate. Its function is as follows. Promotes RNA polymerase assembly. Latches the N- and C-terminal regions of the beta' subunit thereby facilitating its interaction with the beta and alpha subunits. The chain is DNA-directed RNA polymerase subunit omega from Listeria innocua serovar 6a (strain ATCC BAA-680 / CLIP 11262).